The chain runs to 274 residues: Diaminopimelate epimerase (274 aa).

Substrate-binding residues include asparagine 11, glutamine 44, and asparagine 64. The Proton donor role is filled by cysteine 73. Residues 74–75 (GN), asparagine 157, asparagine 190, and 208–209 (ER) each bind substrate. Cysteine 217 acts as the Proton acceptor in catalysis. 218–219 (GS) is a substrate binding site.

Belongs to the diaminopimelate epimerase family. As to quaternary structure, homodimer.

It localises to the cytoplasm. It carries out the reaction (2S,6S)-2,6-diaminopimelate = meso-2,6-diaminopimelate. It participates in amino-acid biosynthesis; L-lysine biosynthesis via DAP pathway; DL-2,6-diaminopimelate from LL-2,6-diaminopimelate: step 1/1. Catalyzes the stereoinversion of LL-2,6-diaminopimelate (L,L-DAP) to meso-diaminopimelate (meso-DAP), a precursor of L-lysine and an essential component of the bacterial peptidoglycan. This is Diaminopimelate epimerase from Haemophilus influenzae (strain PittGG).